Reading from the N-terminus, the 255-residue chain is DNA polymerase epsilon subunit C (255 aa).

The segment at 109 to 255 is disordered; sequence KTSSGLHKLS…DEDEASADDG (147 aa). Over residues 135 to 156 the composition is skewed to acidic residues; that stretch reads MEEDIPEEDLQEDDEMDVDETE. Residues 171–184 are compositionally biased toward low complexity; the sequence is KASASAKSILSAFK. Acidic residues-rich tracts occupy residues 199 to 219 and 236 to 255; these read TEEDEGDEKEEDEDEEEEIDP and DLDEESEVSSDEDEASADDG.

Heterotetramer. Consists of four subunits: POL2, DPB2, DPB3 and DPB4.

It is found in the nucleus. In terms of biological role, as accessory component of the DNA polymerase epsilon (DNA polymerase II) participates in chromosomal DNA replication. In Candida glabrata (strain ATCC 2001 / BCRC 20586 / JCM 3761 / NBRC 0622 / NRRL Y-65 / CBS 138) (Yeast), this protein is DNA polymerase epsilon subunit C (DPB3).